Consider the following 465-residue polypeptide: Cysteine--tRNA ligase (465 aa).

Position 30 (cysteine 30) interacts with Zn(2+). Residues 32–42 (MTVYDYCHVGH) carry the 'HIGH' region motif. Cysteine 214, histidine 239, and glutamate 243 together coordinate Zn(2+). The 'KMSKS' region signature appears at 271–275 (KMSKS). Lysine 274 provides a ligand contact to ATP.

It belongs to the class-I aminoacyl-tRNA synthetase family. Monomer. Zn(2+) serves as cofactor.

The protein localises to the cytoplasm. It carries out the reaction tRNA(Cys) + L-cysteine + ATP = L-cysteinyl-tRNA(Cys) + AMP + diphosphate. The chain is Cysteine--tRNA ligase from Paraburkholderia xenovorans (strain LB400).